Here is a 273-residue protein sequence, read N- to C-terminus: 4-hydroxy-tetrahydrodipicolinate reductase (273 aa).

NAD(+)-binding positions include 12–17 (GAGGRM) and glutamate 38. Arginine 39 contributes to the NADP(+) binding site. Residues 102 to 104 (GTT) and 126 to 129 (AANF) contribute to the NAD(+) site. The Proton donor/acceptor role is filled by histidine 159. Histidine 160 serves as a coordination point for (S)-2,3,4,5-tetrahydrodipicolinate. Catalysis depends on lysine 163, which acts as the Proton donor. 169–170 (GT) contacts (S)-2,3,4,5-tetrahydrodipicolinate.

This sequence belongs to the DapB family. As to quaternary structure, homotetramer.

Its subcellular location is the cytoplasm. It catalyses the reaction (S)-2,3,4,5-tetrahydrodipicolinate + NAD(+) + H2O = (2S,4S)-4-hydroxy-2,3,4,5-tetrahydrodipicolinate + NADH + H(+). It carries out the reaction (S)-2,3,4,5-tetrahydrodipicolinate + NADP(+) + H2O = (2S,4S)-4-hydroxy-2,3,4,5-tetrahydrodipicolinate + NADPH + H(+). It functions in the pathway amino-acid biosynthesis; L-lysine biosynthesis via DAP pathway; (S)-tetrahydrodipicolinate from L-aspartate: step 4/4. Its function is as follows. Catalyzes the conversion of 4-hydroxy-tetrahydrodipicolinate (HTPA) to tetrahydrodipicolinate. This chain is 4-hydroxy-tetrahydrodipicolinate reductase, found in Shigella sonnei (strain Ss046).